The primary structure comprises 385 residues: Telomere-binding protein subunit beta (385 aa).

Disordered regions lie at residues 231–329 and 343–385; these read AADH…ALTT and WHEK…AAKK. The span at 242–262 shows a compositional bias: basic residues; it reads GGAKGKGKAAAKAAKGKKLSA. The span at 263 to 280 shows a compositional bias: basic and acidic residues; sequence KKGDSSAADVRKSVDKIV. Composition is skewed to low complexity over residues 295-304, 312-326, and 365-375; these read KSQAPAAGKS, KAVP…KKSA, and GKASATSGKAS. Basic residues predominate over residues 376–385; the sequence is KASKKTAAKK.

As to quaternary structure, heterodimer of an alpha and a beta subunit.

The protein resides in the nucleus. It is found in the chromosome. The protein localises to the telomere. In terms of biological role, may function as protective capping of the single-stranded telomeric overhang. May also participate in telomere length regulation during DNA replication. Binds specifically to the T4G4-containing extension on the 3'strand and protects this region of the telomere from nuclease digestion and chemical modification. The chain is Telomere-binding protein subunit beta (MAC-41A) from Sterkiella nova (Ciliate).